We begin with the raw amino-acid sequence, 359 residues long: MSIASTQADKKSSNHPNKIKVSGVILVDKPQGMTSQQVVSKVKYLFKSPNHDSKKAGHTGTLDPMATGLLPICLGEATKFSHYQLDADKSYQATILLGSQTDTGDADGQVTAEAPIPAFDDALLDKVAQQFLGAQQQIPPMYSALKKDGKKLYEYARAGIEVDRPPRDIVLKAIELKAIDEQQIQLTVTCSKGTYVRVLAEDIAKAMGTLGHLTALRRLQVGDFKIDETIALADLEALPLEQRQTYLLPVDACIDISAELSLSSEQCERVQMGQRLNVIDQLTDDVQSYITTAIDQHLAANNNSAADSQNIEDTNDDNEQQLVHEIPIDIRLIDEQGAFIGLGAVSLNGRLQPKKLIQL.

D63 acts as the Nucleophile in catalysis.

This sequence belongs to the pseudouridine synthase TruB family. Type 1 subfamily.

It catalyses the reaction uridine(55) in tRNA = pseudouridine(55) in tRNA. In terms of biological role, responsible for synthesis of pseudouridine from uracil-55 in the psi GC loop of transfer RNAs. In Psychrobacter cryohalolentis (strain ATCC BAA-1226 / DSM 17306 / VKM B-2378 / K5), this protein is tRNA pseudouridine synthase B.